A 468-amino-acid polypeptide reads, in one-letter code: ATP synthase subunit beta (468 aa).

155–162 (GGAGVGKT) provides a ligand contact to ATP.

It belongs to the ATPase alpha/beta chains family. In terms of assembly, F-type ATPases have 2 components, CF(1) - the catalytic core - and CF(0) - the membrane proton channel. CF(1) has five subunits: alpha(3), beta(3), gamma(1), delta(1), epsilon(1). CF(0) has three main subunits: a(1), b(2) and c(9-12). The alpha and beta chains form an alternating ring which encloses part of the gamma chain. CF(1) is attached to CF(0) by a central stalk formed by the gamma and epsilon chains, while a peripheral stalk is formed by the delta and b chains.

Its subcellular location is the cell membrane. It carries out the reaction ATP + H2O + 4 H(+)(in) = ADP + phosphate + 5 H(+)(out). Produces ATP from ADP in the presence of a proton gradient across the membrane. The catalytic sites are hosted primarily by the beta subunits. The chain is ATP synthase subunit beta from Streptococcus mutans serotype c (strain ATCC 700610 / UA159).